A 207-amino-acid polypeptide reads, in one-letter code: Twist-related protein 1 (207 aa).

Over residues 1–18 (MMQDVSSSPVSPADDSLS) the composition is skewed to low complexity. The tract at residues 1-110 (MMQDVSSSPV…GGGSPQSYEE (110 aa)) is disordered. Over residues 34 to 43 (RGGRKRRSSR) the composition is skewed to basic residues. 2 stretches are compositionally biased toward gly residues: residues 46 to 65 (AGGG…GGDE) and 80 to 104 (GCGG…GGGS). Residues 113 to 164 (TQRVMANVRERQRTQSLNEAFAALRKIIPTLPSDKLSKIQTLKLAARYIDFL) form the bHLH domain. The segment at 166-196 (QVLQSDELDSKMASCSYVAHERLSYAFSVWR) is sufficient for transactivation activity.

As to quaternary structure, efficient DNA binding requires dimerization with another bHLH protein. Homodimer or heterodimer with E proteins such as TCF3. ID1 binds preferentially to TCF3 but does not interact efficiently with TWIST1 so ID1 levels control the amount of TCF3 available to dimerize with TWIST and thus determine the type of dimer formed.

Its subcellular location is the nucleus. Acts as a transcriptional regulator. Inhibits myogenesis by sequestrating E proteins, inhibiting trans-activation by MEF2, and inhibiting DNA-binding by MYOD1 through physical interaction. This interaction probably involves the basic domains of both proteins. Also represses expression of pro-inflammatory cytokines such as TNFA and IL1B. Regulates cranial suture patterning and fusion. Activates transcription as a heterodimer with E proteins. Regulates gene expression differentially, depending on dimer composition. Homodimers induce expression of FGFR2 and POSTN while heterodimers repress FGFR2 and POSTN expression and induce THBS1 expression. Heterodimerization is also required for osteoblast differentiation. Represses the activity of the circadian transcriptional activator: NPAS2-BMAL1 heterodimer. The sequence is that of Twist-related protein 1 (TWIST1) from Cebus capucinus (White-faced sapajou).